Reading from the N-terminus, the 216-residue chain is Small ribosomal subunit protein uS3 (216 aa).

Positions 39-111 (IYKFFDKLVR…DINLQVSLLK (73 aa)) constitute a KH type-2 domain.

Belongs to the universal ribosomal protein uS3 family. Part of the 30S ribosomal subunit. Forms a tight complex with proteins S10 and S14.

In terms of biological role, binds the lower part of the 30S subunit head. Binds mRNA in the 70S ribosome, positioning it for translation. This Mycoplasmopsis agalactiae (strain NCTC 10123 / CIP 59.7 / PG2) (Mycoplasma agalactiae) protein is Small ribosomal subunit protein uS3.